We begin with the raw amino-acid sequence, 461 residues long: Smoothelin-like protein 2 (461 aa).

A coiled-coil region spans residues 55 to 88 (PLARTVADLQRDNQRLQAQLERLTRQVEALGLAS). Disordered regions lie at residues 87–193 (ASGM…LRLP) and 227–248 (LNPS…KNSS). The span at 94 to 107 (PGTPGTPSPPPAPG) shows a compositional bias: pro residues. Residue T96 is modified to Phosphothreonine. 3 positions are modified to phosphoserine: S101, S129, and S134. Basic and acidic residues predominate over residues 134–147 (SLDHDEASESEMRK). Residues S256 and S269 each carry the phosphoserine modification. The tract at residues 260-307 (AVTASKHSNSPPLVTPPQSPVSPQPPAITQVHRQGERRRELVRSQTLP) is disordered. Positions 272 to 285 (LVTPPQSPVSPQPP) are enriched in pro residues. The residue at position 274 (T274) is a Phosphothreonine. Position 278 is a phosphoserine (S278). Basic and acidic residues predominate over residues 292-301 (RQGERRRELV). Residue S344 is modified to Phosphoserine. The region spanning 351–458 (SSIKQILLEW…YVQSLYNHLR (108 aa)) is the Calponin-homology (CH) domain.

This sequence belongs to the smoothelin family.

The chain is Smoothelin-like protein 2 (SMTNL2) from Homo sapiens (Human).